We begin with the raw amino-acid sequence, 276 residues long: Insulin-like growth factor-binding protein 2-A (276 aa).

A signal peptide spans 1–22 (MLSYVSCGLLLALVTFHGTARS). In terms of domain architecture, IGFBP N-terminal spans 24 to 105 (MVFRCPSCTA…VQGLGRCGRK (82 aa)). Intrachain disulfides connect cysteine 28/cysteine 55, cysteine 31/cysteine 57, cysteine 39/cysteine 58, cysteine 46/cysteine 61, cysteine 69/cysteine 82, cysteine 76/cysteine 102, cysteine 180/cysteine 214, cysteine 225/cysteine 236, and cysteine 238/cysteine 259. Residues 177-259 (QSQCQQELDQ…SPLIRGDPNC (83 aa)) form the Thyroglobulin type-1 domain. The Cell attachment site motif lies at 254-256 (RGD).

As to quaternary structure, interacts equally well with igf1 and igf2. As to expression, in embryos at 24 hpf, initially expressed in the lens and cranial region, and at 48 and 72 hpf in the brain boundary vasculature. Expression in these regions persists throughout the hatching period and by 96 hpf expression is most abundant in the liver. In both male and female adults, highest expression is in the liver with modest expression in the brain. In male but not females adults, expressed at a low level in muscle and gonad. Also expressed in the adult intestine.

It localises to the secreted. Functionally, IGF-binding proteins prolong the half-life of the IGFs and have been shown to either inhibit or stimulate the growth promoting effects of the IGFs on cell culture. They alter the interaction of IGFs with their cell surface receptors. This chain is Insulin-like growth factor-binding protein 2-A (igfbp2a), found in Danio rerio (Zebrafish).